Reading from the N-terminus, the 128-residue chain is Kinetoplast-associated protein 4 (128 aa).

The propeptide occupies 1-10 (MLRFVPRRLA). Residues 60–87 (AHPGFKRKEKEPKELKAAKAAKTSTPRA) are disordered. The segment covering 65 to 76 (KRKEKEPKELKA) has biased composition (basic and acidic residues).

Belongs to the KAP family. In terms of assembly, associates with the kinetoplast DNA network.

It localises to the mitochondrion matrix. Its subcellular location is the kinetoplast. Functionally, histone H1-like DNA-binding protein involved in the organization and segregation of kinetoplast DNA (kDNA). The mitochondrial DNA of kinetoplastid protozoa consists of about 5,000 minicircles and 20 to 30 maxicircles. These circular DNAs are held together by catenation into a highly organized compact disk structure referred to as a kinetoplast DNA (kDNA) network. Binds preferentially to a specific fragment of minicircle DNA and is able to compact kDNA networks through DNA charge neutralization and condensation. The chain is Kinetoplast-associated protein 4 (KAP4) from Crithidia fasciculata.